A 100-amino-acid polypeptide reads, in one-letter code: MELTPREKDKLLLFTAALVAERRLARGLKLNYPESVALISAFIMEGARDGKSVASLMEDGRHVLTRDRVMEGVPEMIPDIQVEATFPDGSKLVTVHNPIV.

This sequence belongs to the urease gamma subunit family. Heterotrimer of UreA (gamma), UreB (beta) and UreC (alpha) subunits. Three heterotrimers associate to form the active enzyme.

Its subcellular location is the cytoplasm. It catalyses the reaction urea + 2 H2O + H(+) = hydrogencarbonate + 2 NH4(+). It participates in nitrogen metabolism; urea degradation; CO(2) and NH(3) from urea (urease route): step 1/1. The sequence is that of Urease subunit gamma from Citrobacter koseri (strain ATCC BAA-895 / CDC 4225-83 / SGSC4696).